The sequence spans 146 residues: Large ribosomal subunit protein uL15 (146 aa).

Residues 1 to 54 are disordered; sequence MTLRLNELAPAEGAKREHRRLGRGIGSGVGKTGGRGIKGQKSRKSGGVRPGFEG. Gly residues predominate over residues 23–37; the sequence is RGIGSGVGKTGGRGI.

This sequence belongs to the universal ribosomal protein uL15 family. Part of the 50S ribosomal subunit.

Functionally, binds to the 23S rRNA. The sequence is that of Large ribosomal subunit protein uL15 from Acinetobacter baumannii (strain SDF).